The chain runs to 242 residues: Segregation and condensation protein A (242 aa).

Belongs to the ScpA family. As to quaternary structure, component of a cohesin-like complex composed of ScpA, ScpB and the Smc homodimer, in which ScpA and ScpB bind to the head domain of Smc. The presence of the three proteins is required for the association of the complex with DNA.

It is found in the cytoplasm. Its function is as follows. Participates in chromosomal partition during cell division. May act via the formation of a condensin-like complex containing Smc and ScpB that pull DNA away from mid-cell into both cell halves. The protein is Segregation and condensation protein A of Streptococcus pneumoniae serotype 4 (strain ATCC BAA-334 / TIGR4).